The following is a 181-amino-acid chain: Probable calcium-binding protein CML16 (181 aa).

The segment at Met-1–Ala-24 is disordered. 4 consecutive EF-hand domains span residues Pro-23–Pro-58, Ala-63–Asp-98, Glu-100–Gly-135, and Cys-136–Ala-171. The Ca(2+) site is built by Asp-36, Asp-38, Asp-40, Arg-42, Glu-47, Asp-76, Asp-78, Asp-80, Glu-87, Asp-113, Asp-115, Asp-117, Arg-119, Glu-124, Asp-149, Asp-151, Asp-153, Cys-155, and Glu-160.

Potential calcium sensor. The chain is Probable calcium-binding protein CML16 (CML16) from Oryza sativa subsp. japonica (Rice).